A 1016-amino-acid chain; its full sequence is S-layer protein A (1016 aa).

The N-terminal stretch at 1 to 30 is a signal peptide; it reads MDLSTKKVISAGLVFIYALSLAMLVPMFLA.

The protein belongs to the Sulfolobales SlaA family. The mushroom-shaped unit cells of the Sulfolobales' S-layers may consist of three SlaB subunits and six SlaA subunits.

Its subcellular location is the secreted. It is found in the cell wall. The protein resides in the S-layer. In terms of biological role, S-layer large protein. May form the highly ordered outer sheath. The chain is S-layer protein A from Acidianus ambivalens (Desulfurolobus ambivalens).